Here is a 189-residue protein sequence, read N- to C-terminus: Elongation factor P (189 aa).

An N6-(3,6-diaminohexanoyl)-5-hydroxylysine modification is found at Lys-34.

It belongs to the elongation factor P family. May be beta-lysylated on the epsilon-amino group of Lys-34 by the combined action of EpmA and EpmB, and then hydroxylated on the C5 position of the same residue by EpmC (if this protein is present). Lysylation is critical for the stimulatory effect of EF-P on peptide-bond formation. The lysylation moiety may extend toward the peptidyltransferase center and stabilize the terminal 3-CCA end of the tRNA. Hydroxylation of the C5 position on Lys-34 may allow additional potential stabilizing hydrogen-bond interactions with the P-tRNA.

The protein localises to the cytoplasm. Its pathway is protein biosynthesis; polypeptide chain elongation. Its function is as follows. Involved in peptide bond synthesis. Alleviates ribosome stalling that occurs when 3 or more consecutive Pro residues or the sequence PPG is present in a protein, possibly by augmenting the peptidyl transferase activity of the ribosome. Modification of Lys-34 is required for alleviation. In Saccharophagus degradans (strain 2-40 / ATCC 43961 / DSM 17024), this protein is Elongation factor P.